Consider the following 75-residue polypeptide: Accessory gland-specific peptide 57Da (75 aa).

Residues 1–19 (MKFLALFVTLLVVLALVSA) form the signal peptide. The segment at 55–75 (AAPAAAPAAPEAGLADAPAES) is disordered. Low complexity predominate over residues 56 to 75 (APAAAPAAPEAGLADAPAES).

Lumen fluid of male accessory glands, becomes seminal fluid.

Its subcellular location is the secreted. Transferred from male to female during mating and may affect egglaying and behavior after mating. The chain is Accessory gland-specific peptide 57Da (Mst57Da) from Drosophila melanogaster (Fruit fly).